A 188-amino-acid chain; its full sequence is Multiple organellar RNA editing factor 7, mitochondrial (188 aa).

The N-terminal 20 residues, M1–S20, are a transit peptide targeting the mitochondrion. Residues D169–I188 are disordered. Residues V174–I188 show a composition bias toward basic residues.

It belongs to the MORF family. As to quaternary structure, heterodimers with MORF8/RIP1, MORF5/RIP5 and MORF6/RIP6.

The protein localises to the mitochondrion. Its function is as follows. Involved in organellar RNA editing. Required for the processing of few RNA editing sites in mitochondria. This chain is Multiple organellar RNA editing factor 7, mitochondrial, found in Arabidopsis thaliana (Mouse-ear cress).